A 644-amino-acid polypeptide reads, in one-letter code: N-acetylgalactosaminyltransferase 4 (644 aa).

Over 1 to 13 (MAIKKRYVKRLLR) the chain is Cytoplasmic. The helical; Signal-anchor for type II membrane protein transmembrane segment at 14 to 34 (KVVLLLVVIVTVSLVTTLVVE) threads the bilayer. The Lumenal segment spans residues 35-644 (RRMKNAAELT…MLDTFYDGLK (610 aa)). N-linked (GlcNAc...) asparagine glycosylation is found at N157 and N179. The catalytic subdomain A stretch occupies residues 177-288 (LPNISVIFIF…YNWLPPLIEP (112 aa)). Residues D218 and R249 each coordinate substrate. D272 provides a ligand contact to Mn(2+). Position 273 (S273) interacts with substrate. H274 provides a ligand contact to Mn(2+). Positions 345 to 407 (PYRSPVMMGG…PCSRVAHIFR (63 aa)) are catalytic subdomain B. W376 is a substrate binding site. H404 serves as a coordination point for Mn(2+). R407 contributes to the substrate binding site. Residues 496 to 629 (AAGIIQNVAN…GNDRQRWEFG (134 aa)) form the Ricin B-type lectin domain. Cysteines 509 and 526 form a disulfide. N-linked (GlcNAc...) asparagine glycosylation is found at N529 and N565. 2 cysteine pairs are disulfide-bonded: C556–C573 and C600–C617. N632 is a glycosylation site (N-linked (GlcNAc...) asparagine).

The protein belongs to the glycosyltransferase 2 family. GalNAc-T subfamily. Requires Mn(2+) as cofactor. Expressed in developing oocytes and egg chambers. During embryonic stages 9-11, expressed in the primordium of the foregut, midgut and hindgut. During embryonic stages 12-13, shows specific expression in the proventriculus that continues until the end of embryogenesis. In third instar larvae, ubiquitously expressed in wing, eye-antennal, leg and haltere imaginal disks.

It localises to the golgi apparatus membrane. The enzyme catalyses L-seryl-[protein] + UDP-N-acetyl-alpha-D-galactosamine = a 3-O-[N-acetyl-alpha-D-galactosaminyl]-L-seryl-[protein] + UDP + H(+). The catalysed reaction is L-threonyl-[protein] + UDP-N-acetyl-alpha-D-galactosamine = a 3-O-[N-acetyl-alpha-D-galactosaminyl]-L-threonyl-[protein] + UDP + H(+). It functions in the pathway protein modification; protein glycosylation. In terms of biological role, glycopeptide transferase involved in O-linked oligosaccharide biosynthesis, which catalyzes the transfer of an N-acetyl-D-galactosamine residue to an already glycosylated peptide. In contrast to other proteins of the family, it does not act as a peptide transferase that transfers GalNAc onto serine or threonine residue on the protein receptor, but instead requires the prior addition of a GalNAc on a peptide before adding additional GalNAc moieties. Some peptide transferase activity is however not excluded, considering that its appropriate peptide substrate may remain unidentified. Prefers the diglycosylated Muc5AC-3/13 as substrate. The polypeptide is N-acetylgalactosaminyltransferase 4 (Drosophila melanogaster (Fruit fly)).